Reading from the N-terminus, the 131-residue chain is Lysosomal enzyme trafficking factor (131 aa).

Helical transmembrane passes span 8–28 (MGWI…YYVF) and 66–86 (LPFW…FLFL).

This sequence belongs to the LYSET family.

The protein resides in the golgi apparatus membrane. Functionally, required for mannose-6-phosphate-dependent trafficking of lysosomal enzymes. LYSET bridges GlcNAc-1-phosphate transferase (GNPTAB), to the membrane-bound transcription factor site-1 protease (MBTPS1), thus allowing proteolytic activation of the GNPTAB. GNPTAB is involved in the regulation of M6P-dependent Golgi-to-lysosome trafficking of lysosomal enzymes. LYSET is thus an essential factor for maturation and delivery of lysosomal hydrolases. The chain is Lysosomal enzyme trafficking factor (lyset-b) from Xenopus laevis (African clawed frog).